The chain runs to 445 residues: mRNA cleavage and polyadenylation factor CLP1 (445 aa).

Residues glutamate 33 and 131–136 (SSGKTS) contribute to the ATP site.

Belongs to the Clp1 family. Clp1 subfamily. Component of a pre-mRNA cleavage factor complex. Interacts directly with PCF11.

The protein resides in the nucleus. Required for endonucleolytic cleavage during polyadenylation-dependent pre-mRNA 3'-end formation. The chain is mRNA cleavage and polyadenylation factor CLP1 from Eremothecium gossypii (strain ATCC 10895 / CBS 109.51 / FGSC 9923 / NRRL Y-1056) (Yeast).